Here is a 1651-residue protein sequence, read N- to C-terminus: Vitellogenin-6 (1651 aa).

Positions 1-15 are cleaved as a signal peptide; it reads MKFFIALALLGAALA. Residues 34–716 form the Vitellogenin domain; it reads FRAGREYRYL…TTESVLPTEM (683 aa). Asn252 and Asn1288 each carry an N-linked (GlcNAc...) asparagine glycan. Residues 1340–1515 enclose the VWFD domain; the sequence is ANCVVKSTKI…SYLYKDSKCN (176 aa). 2 disulfides stabilise this stretch: Cys1342-Cys1479 and Cys1364-Cys1514. The tract at residues 1527–1556 is disordered; sequence FQRIEKNQEEEKDQEMNYEESRREQDDEPT.

As to expression, synthesized in Caenorhabditis only by 32 cells building the intestine of adult hermaphroditic individuals; they are cotranslationally secreted into the body cavity and subsequently taken up by the gonad.

The protein localises to the secreted. Its function is as follows. Precursor of the egg-yolk proteins that are sources of nutrients during embryonic development. May play a role in cholesterol uptake. May be involved in thermotolerance. The sequence is that of Vitellogenin-6 (vit-6) from Caenorhabditis elegans.